A 228-amino-acid polypeptide reads, in one-letter code: Ribose-5-phosphate isomerase A (228 aa).

Substrate-binding positions include 32-35, 85-88, and 98-101; these read TGST, DGAD, and KGGG. Glutamate 107 functions as the Proton acceptor in the catalytic mechanism. Lysine 125 is a substrate binding site.

Belongs to the ribose 5-phosphate isomerase family. Homodimer.

It catalyses the reaction aldehydo-D-ribose 5-phosphate = D-ribulose 5-phosphate. It participates in carbohydrate degradation; pentose phosphate pathway; D-ribose 5-phosphate from D-ribulose 5-phosphate (non-oxidative stage): step 1/1. Catalyzes the reversible conversion of ribose-5-phosphate to ribulose 5-phosphate. In Cupriavidus necator (strain ATCC 17699 / DSM 428 / KCTC 22496 / NCIMB 10442 / H16 / Stanier 337) (Ralstonia eutropha), this protein is Ribose-5-phosphate isomerase A.